The sequence spans 420 residues: UDP-N-acetylglucosamine 1-carboxyvinyltransferase (420 aa).

22-23 (KN) serves as a coordination point for phosphoenolpyruvate. Arg93 contributes to the UDP-N-acetyl-alpha-D-glucosamine binding site. The active-site Proton donor is Cys117. Cys117 is modified (2-(S-cysteinyl)pyruvic acid O-phosphothioketal). Positions 306 and 328 each coordinate UDP-N-acetyl-alpha-D-glucosamine.

Belongs to the EPSP synthase family. MurA subfamily.

The protein localises to the cytoplasm. It carries out the reaction phosphoenolpyruvate + UDP-N-acetyl-alpha-D-glucosamine = UDP-N-acetyl-3-O-(1-carboxyvinyl)-alpha-D-glucosamine + phosphate. The protein operates within cell wall biogenesis; peptidoglycan biosynthesis. In terms of biological role, cell wall formation. Adds enolpyruvyl to UDP-N-acetylglucosamine. This Colwellia psychrerythraea (strain 34H / ATCC BAA-681) (Vibrio psychroerythus) protein is UDP-N-acetylglucosamine 1-carboxyvinyltransferase.